The primary structure comprises 300 residues: Inosose dehydratase (300 aa).

This sequence belongs to the IolE/MocC family. The cofactor is glutathione. Requires Co(2+) as cofactor. It depends on Mn(2+) as a cofactor.

It catalyses the reaction scyllo-inosose = 3D-3,5/4-trihydroxycyclohexane-1,2-dione + H2O. Its pathway is polyol metabolism; myo-inositol degradation into acetyl-CoA; acetyl-CoA from myo-inositol: step 2/7. In terms of biological role, catalyzes the dehydration of inosose (2-keto-myo-inositol, 2KMI or 2,4,6/3,5-pentahydroxycyclohexanone) to 3D-(3,5/4)-trihydroxycyclohexane-1,2-dione (D-2,3-diketo-4-deoxy-epi-inositol). The polypeptide is Inosose dehydratase (Bacillus licheniformis (strain ATCC 14580 / DSM 13 / JCM 2505 / CCUG 7422 / NBRC 12200 / NCIMB 9375 / NCTC 10341 / NRRL NRS-1264 / Gibson 46)).